Consider the following 1584-residue polypeptide: Pentafunctional AROM polypeptide (1584 aa).

The interval methionine 1–aspartate 384 is 3-dehydroquinate synthase. NAD(+) is bound by residues aspartate 46–asparagine 48, glutamate 83–lysine 86, glycine 114–valine 116, and aspartate 119. Arginine 130 contacts 7-phospho-2-dehydro-3-deoxy-D-arabino-heptonate. Threonine 139 to threonine 140 is a binding site for NAD(+). 2 residues coordinate 7-phospho-2-dehydro-3-deoxy-D-arabino-heptonate: aspartate 146 and lysine 152. An NAD(+)-binding site is contributed by lysine 161. Position 162 (asparagine 162) interacts with 7-phospho-2-dehydro-3-deoxy-D-arabino-heptonate. Residues phenylalanine 179–threonine 182 and asparagine 190 contribute to the NAD(+) site. Glutamate 194 contributes to the Zn(2+) binding site. 7-phospho-2-dehydro-3-deoxy-D-arabino-heptonate is bound by residues glutamate 194 to lysine 197 and lysine 250. Glutamate 260 functions as the Proton acceptor; for 3-dehydroquinate synthase activity in the catalytic mechanism. 7-phospho-2-dehydro-3-deoxy-D-arabino-heptonate contacts are provided by residues arginine 264 to asparagine 268 and histidine 271. A Zn(2+)-binding site is contributed by histidine 271. The active-site Proton acceptor; for 3-dehydroquinate synthase activity is the histidine 275. The 7-phospho-2-dehydro-3-deoxy-D-arabino-heptonate site is built by histidine 287 and lysine 356. Zn(2+) is bound at residue histidine 287. The segment at valine 397 to isoleucine 843 is EPSP synthase. Residue cysteine 825 is the For EPSP synthase activity of the active site. Positions arginine 863 to serine 1058 are shikimate kinase. Residue glycine 870–threonine 877 participates in ATP binding. The tract at residues leucine 1059 to glutamine 1280 is 3-dehydroquinase. Histidine 1182 (proton acceptor; for 3-dehydroquinate dehydratase activity) is an active-site residue. The active-site Schiff-base intermediate with substrate; for 3-dehydroquinate dehydratase activity is lysine 1211. The tract at residues proline 1293–asparagine 1584 is shikimate dehydrogenase.

This sequence in the N-terminal section; belongs to the sugar phosphate cyclases superfamily. Dehydroquinate synthase family. The protein in the 2nd section; belongs to the EPSP synthase family. It in the 3rd section; belongs to the shikimate kinase family. In the 4th section; belongs to the type-I 3-dehydroquinase family. This sequence in the C-terminal section; belongs to the shikimate dehydrogenase family. In terms of assembly, homodimer. Zn(2+) serves as cofactor.

The protein resides in the cytoplasm. The catalysed reaction is 7-phospho-2-dehydro-3-deoxy-D-arabino-heptonate = 3-dehydroquinate + phosphate. It catalyses the reaction 3-dehydroquinate = 3-dehydroshikimate + H2O. It carries out the reaction shikimate + NADP(+) = 3-dehydroshikimate + NADPH + H(+). The enzyme catalyses shikimate + ATP = 3-phosphoshikimate + ADP + H(+). The catalysed reaction is 3-phosphoshikimate + phosphoenolpyruvate = 5-O-(1-carboxyvinyl)-3-phosphoshikimate + phosphate. It functions in the pathway metabolic intermediate biosynthesis; chorismate biosynthesis; chorismate from D-erythrose 4-phosphate and phosphoenolpyruvate: step 2/7. The protein operates within metabolic intermediate biosynthesis; chorismate biosynthesis; chorismate from D-erythrose 4-phosphate and phosphoenolpyruvate: step 3/7. Its pathway is metabolic intermediate biosynthesis; chorismate biosynthesis; chorismate from D-erythrose 4-phosphate and phosphoenolpyruvate: step 4/7. It participates in metabolic intermediate biosynthesis; chorismate biosynthesis; chorismate from D-erythrose 4-phosphate and phosphoenolpyruvate: step 5/7. It functions in the pathway metabolic intermediate biosynthesis; chorismate biosynthesis; chorismate from D-erythrose 4-phosphate and phosphoenolpyruvate: step 6/7. Its function is as follows. The AROM polypeptide catalyzes 5 consecutive enzymatic reactions in prechorismate polyaromatic amino acid biosynthesis. The protein is Pentafunctional AROM polypeptide of Schizosaccharomyces japonicus (strain yFS275 / FY16936) (Fission yeast).